Consider the following 371-residue polypeptide: Histidinol-phosphate aminotransferase (371 aa).

At lysine 228 the chain carries N6-(pyridoxal phosphate)lysine.

Belongs to the class-II pyridoxal-phosphate-dependent aminotransferase family. Histidinol-phosphate aminotransferase subfamily. Pyridoxal 5'-phosphate serves as cofactor.

The catalysed reaction is L-histidinol phosphate + 2-oxoglutarate = 3-(imidazol-4-yl)-2-oxopropyl phosphate + L-glutamate. Its pathway is amino-acid biosynthesis; L-histidine biosynthesis; L-histidine from 5-phospho-alpha-D-ribose 1-diphosphate: step 7/9. The protein is Histidinol-phosphate aminotransferase of Methanococcus aeolicus (strain ATCC BAA-1280 / DSM 17508 / OCM 812 / Nankai-3).